Here is a 152-residue protein sequence, read N- to C-terminus: MIKERTFLAIKPDGVQRGYVSDIIGRFEKKGFKLVGLKQLIPTKQLAQDHYGVHRERPFFKDLVEFISSGPVVAMIWEGEGVILSARKLIGATKPLEAEPGTIRGDLAIDIGRNIIHGSDGEETAKFEINLWFNQDEICDWETSDSEWRAEN.

6 residues coordinate ATP: K11, F59, R87, T93, R104, and N114. The active-site Pros-phosphohistidine intermediate is H117.

Belongs to the NDK family. Homotetramer. Mg(2+) serves as cofactor.

The protein resides in the cytoplasm. The enzyme catalyses a 2'-deoxyribonucleoside 5'-diphosphate + ATP = a 2'-deoxyribonucleoside 5'-triphosphate + ADP. It catalyses the reaction a ribonucleoside 5'-diphosphate + ATP = a ribonucleoside 5'-triphosphate + ADP. Functionally, major role in the synthesis of nucleoside triphosphates other than ATP. The ATP gamma phosphate is transferred to the NDP beta phosphate via a ping-pong mechanism, using a phosphorylated active-site intermediate. In Prochlorococcus marinus subsp. pastoris (strain CCMP1986 / NIES-2087 / MED4), this protein is Nucleoside diphosphate kinase.